The chain runs to 452 residues: UPF0210 protein Csac_1314 (452 aa).

Belongs to the UPF0210 family. As to quaternary structure, homodimer.

The polypeptide is UPF0210 protein Csac_1314 (Caldicellulosiruptor saccharolyticus (strain ATCC 43494 / DSM 8903 / Tp8T 6331)).